Reading from the N-terminus, the 387-residue chain is S-adenosylmethionine synthase (387 aa).

Residue H15 coordinates ATP. Residue D17 coordinates Mg(2+). E43 is a binding site for K(+). Residues E56 and Q99 each contribute to the L-methionine site. Residues 99 to 109 (QSPDIAQGVNN) form a flexible loop region. Residues 166-168 (DAK), 232-233 (RF), D241, 247-248 (RK), A264, and K268 each bind ATP. D241 contacts L-methionine. An L-methionine-binding site is contributed by K272.

It belongs to the AdoMet synthase family. In terms of assembly, homotetramer; dimer of dimers. Mg(2+) serves as cofactor. Requires K(+) as cofactor.

The protein localises to the cytoplasm. The catalysed reaction is L-methionine + ATP + H2O = S-adenosyl-L-methionine + phosphate + diphosphate. The protein operates within amino-acid biosynthesis; S-adenosyl-L-methionine biosynthesis; S-adenosyl-L-methionine from L-methionine: step 1/1. Functionally, catalyzes the formation of S-adenosylmethionine (AdoMet) from methionine and ATP. The overall synthetic reaction is composed of two sequential steps, AdoMet formation and the subsequent tripolyphosphate hydrolysis which occurs prior to release of AdoMet from the enzyme. This is S-adenosylmethionine synthase from Methylobacillus flagellatus (strain ATCC 51484 / DSM 6875 / VKM B-1610 / KT).